A 355-amino-acid chain; its full sequence is MLISKLTPFIERFEEITRLLGTMEVISDIKRMTELSKEQSALEALVLKAKEYLQTHRSIQENRALFEDKELGDLAKEENKLLEESLESLESEIKLLLIPKDPNDDKNIYLEIRAGTGGDEAGIFVGDLFKSYCRYADLKGWKVEIISSSENSVGGYKEVIALIKGNGVYSRLKYEGGTHRVQRVPETESQGRIHTSAITVAIMPEVDDVEVNINPNDLKIDVFRSGGHGGQSVNTTDSAVRITHLPTGISVSMQDEKSQHKNKDKALKILKARLYEAELEAKLSENSAARKLQVGSGDRSERIRTYNYPQNRLTDHRIGLTLYSLEEIMLSGNFDQVVDPIVAHYQAEMMKESED.

Gln231 bears the N5-methylglutamine mark.

Belongs to the prokaryotic/mitochondrial release factor family. Methylated by PrmC. Methylation increases the termination efficiency of RF1.

The protein resides in the cytoplasm. Peptide chain release factor 1 directs the termination of translation in response to the peptide chain termination codons UAG and UAA. This Wolinella succinogenes (strain ATCC 29543 / DSM 1740 / CCUG 13145 / JCM 31913 / LMG 7466 / NCTC 11488 / FDC 602W) (Vibrio succinogenes) protein is Peptide chain release factor 1.